We begin with the raw amino-acid sequence, 703 residues long: Polyribonucleotide nucleotidyltransferase (703 aa).

Mg(2+) contacts are provided by Asp-488 and Asp-494. The region spanning 555-614 (PRLYVMKINPEKIRDVIGKGGAVIRALTEETGTQINIEEDGTITIASNDSAKADEAKRRI) is the KH domain. The region spanning 624–692 (GKVYEGAITK…EKGRVKLSMK (69 aa)) is the S1 motif domain.

The protein belongs to the polyribonucleotide nucleotidyltransferase family. Mg(2+) is required as a cofactor.

It localises to the cytoplasm. It catalyses the reaction RNA(n+1) + phosphate = RNA(n) + a ribonucleoside 5'-diphosphate. Functionally, involved in mRNA degradation. Catalyzes the phosphorolysis of single-stranded polyribonucleotides processively in the 3'- to 5'-direction. The sequence is that of Polyribonucleotide nucleotidyltransferase from Polaromonas naphthalenivorans (strain CJ2).